The chain runs to 305 residues: UDP-3-O-acyl-N-acetylglucosamine deacetylase (305 aa).

Residues His-79, His-238, and Asp-242 each contribute to the Zn(2+) site. The active-site Proton donor is His-265.

This sequence belongs to the LpxC family. The cofactor is Zn(2+).

It carries out the reaction a UDP-3-O-[(3R)-3-hydroxyacyl]-N-acetyl-alpha-D-glucosamine + H2O = a UDP-3-O-[(3R)-3-hydroxyacyl]-alpha-D-glucosamine + acetate. The protein operates within glycolipid biosynthesis; lipid IV(A) biosynthesis; lipid IV(A) from (3R)-3-hydroxytetradecanoyl-[acyl-carrier-protein] and UDP-N-acetyl-alpha-D-glucosamine: step 2/6. Catalyzes the hydrolysis of UDP-3-O-myristoyl-N-acetylglucosamine to form UDP-3-O-myristoylglucosamine and acetate, the committed step in lipid A biosynthesis. The sequence is that of UDP-3-O-acyl-N-acetylglucosamine deacetylase from Vibrio atlanticus (strain LGP32) (Vibrio splendidus (strain Mel32)).